The sequence spans 450 residues: Bifunctional protein GlmU (450 aa).

The pyrophosphorylase stretch occupies residues 1 to 229 (MGVALIVLAA…EAETLGINTR (229 aa)). Residues 8–11 (LAAG), lysine 22, glutamine 75, 80–81 (GT), 103–105 (YGD), glycine 141, glutamate 155, asparagine 170, and asparagine 227 contribute to the UDP-N-acetyl-alpha-D-glucosamine site. Mg(2+) is bound at residue aspartate 105. Asparagine 227 is a binding site for Mg(2+). The segment at 230–250 (TELAAAEQAFQARARARALED) is linker. The interval 251-450 (GVTLADPATT…RARKSAKGAQ (200 aa)) is N-acetyltransferase. 2 residues coordinate UDP-N-acetyl-alpha-D-glucosamine: arginine 316 and lysine 334. Residue histidine 346 is the Proton acceptor of the active site. UDP-N-acetyl-alpha-D-glucosamine contacts are provided by tyrosine 349 and asparagine 360. Residues alanine 363, 369 to 370 (NY), serine 388, threonine 406, and arginine 423 each bind acetyl-CoA.

This sequence in the N-terminal section; belongs to the N-acetylglucosamine-1-phosphate uridyltransferase family. The protein in the C-terminal section; belongs to the transferase hexapeptide repeat family. Homotrimer. Mg(2+) is required as a cofactor.

It is found in the cytoplasm. The catalysed reaction is alpha-D-glucosamine 1-phosphate + acetyl-CoA = N-acetyl-alpha-D-glucosamine 1-phosphate + CoA + H(+). It catalyses the reaction N-acetyl-alpha-D-glucosamine 1-phosphate + UTP + H(+) = UDP-N-acetyl-alpha-D-glucosamine + diphosphate. It participates in nucleotide-sugar biosynthesis; UDP-N-acetyl-alpha-D-glucosamine biosynthesis; N-acetyl-alpha-D-glucosamine 1-phosphate from alpha-D-glucosamine 6-phosphate (route II): step 2/2. It functions in the pathway nucleotide-sugar biosynthesis; UDP-N-acetyl-alpha-D-glucosamine biosynthesis; UDP-N-acetyl-alpha-D-glucosamine from N-acetyl-alpha-D-glucosamine 1-phosphate: step 1/1. The protein operates within bacterial outer membrane biogenesis; LPS lipid A biosynthesis. Catalyzes the last two sequential reactions in the de novo biosynthetic pathway for UDP-N-acetylglucosamine (UDP-GlcNAc). The C-terminal domain catalyzes the transfer of acetyl group from acetyl coenzyme A to glucosamine-1-phosphate (GlcN-1-P) to produce N-acetylglucosamine-1-phosphate (GlcNAc-1-P), which is converted into UDP-GlcNAc by the transfer of uridine 5-monophosphate (from uridine 5-triphosphate), a reaction catalyzed by the N-terminal domain. In Dinoroseobacter shibae (strain DSM 16493 / NCIMB 14021 / DFL 12), this protein is Bifunctional protein GlmU.